The primary structure comprises 175 residues: Glucagon family neuropeptides (175 aa).

An N-terminal signal peptide occupies residues 1–23 (MSGNVYKTLLTLLVYGLIMHCNV). A propeptide spanning residues 24 to 80 (YCSPDRWTPVPGAKLEEEVYDEDGNTLQDFALRAGAPGGGGPRPRWGRCTALYYPPG) is cleaved from the precursor. The important for receptor binding stretch occupies residues 149 to 157 (VKKYLAAVL). Leucine 157 bears the Leucine amide mark. Lysine 168 bears the Lysine amide mark. Residues 172–175 (VAYL) constitute a propeptide that is removed on maturation.

Belongs to the glucagon family.

Its subcellular location is the secreted. Primary role of GRF is to release GH from the pituitary. Its function is as follows. PACAP is a neuropeptide involved in diverse array of physiological processes through activating the PACAP subfamily of class B1 G protein-coupled receptors: VIP receptor 1 (VIPR1), VIP receptor 2 (VIPR2), and PACAP type I receptor (ADCYAP1R1). Exerts neuroprotective and general cytoprotective effects due to anti-apoptotic, anti-inflammatory, and antioxidant actions. Promotes neuron projection development through the RAPGEF2/Rap1/B-Raf/ERK pathway. In chromaffin cells, induces long-lasting increase of intracellular calcium concentrations and neuroendocrine secretion. Involved in the control of glucose homeostasis, induces insulin secretion by pancreatic beta cells. PACAP exists in two bioactive forms from proteolysis of the same precursor protein, PACAP27 and PACAP38, which differ by eleven amino acid residues in the C-terminus. The polypeptide is Glucagon family neuropeptides (ADCYAP1) (Gallus gallus (Chicken)).